A 503-amino-acid chain; its full sequence is Maturase K (503 aa).

The protein belongs to the intron maturase 2 family. MatK subfamily.

It is found in the plastid. Its subcellular location is the chloroplast. Its function is as follows. Usually encoded in the trnK tRNA gene intron. Probably assists in splicing its own and other chloroplast group II introns. The chain is Maturase K from Rhamnus cathartica (Common buckthorn).